We begin with the raw amino-acid sequence, 297 residues long: Calponin-1 (297 aa).

The region spanning 28–131 (HQREQELREW…STLLALASMA (104 aa)) is the Calponin-homology (CH) domain. Position 48 is a phosphoserine (Ser48). Calponin-like repeat units follow at residues 164–189 (IGLQ…RHLY), 204–229 (ISLQ…RQIF), and 243–268 (VSLQ…RQVY). Thr170 bears the Phosphothreonine; by ROCK2 mark. Ser175 is modified (phosphoserine; by ROCK2). Thr180 and Thr184 each carry phosphothreonine; by ROCK2. Thr259 carries the phosphothreonine; by ROCK2 modification.

It belongs to the calponin family. As to quaternary structure, part of cGMP kinase signaling complex at least composed of ACTA2/alpha-actin, CNN1/calponin H1, PLN/phospholamban, PRKG1 and ITPR1. Smooth muscle, and tissues containing significant amounts of smooth muscle.

Its function is as follows. Thin filament-associated protein that is implicated in the regulation and modulation of smooth muscle contraction. It is capable of binding to actin, calmodulin and tropomyosin. The interaction of calponin with actin inhibits the actomyosin Mg-ATPase activity. The protein is Calponin-1 (Cnn1) of Rattus norvegicus (Rat).